The primary structure comprises 254 residues: Ribosomal protein L11 methyltransferase (254 aa).

Threonine 107, glycine 128, aspartate 149, serine 175, and asparagine 191 together coordinate S-adenosyl-L-methionine.

This sequence belongs to the methyltransferase superfamily. PrmA family.

The protein resides in the cytoplasm. The enzyme catalyses L-lysyl-[protein] + 3 S-adenosyl-L-methionine = N(6),N(6),N(6)-trimethyl-L-lysyl-[protein] + 3 S-adenosyl-L-homocysteine + 3 H(+). It carries out the reaction an N-terminal L-alpha-aminoacyl-[protein] + 3 S-adenosyl-L-methionine = an N-terminal trimethyl-L-alpha-aminoacyl-[protein] + 3 S-adenosyl-L-homocysteine + 3 H(+). Its function is as follows. Methylates ribosomal protein L11. Preferentially recognizes free L11 before its incorporation into 50S subunits. This function is dispensable for growth and thermostability. The chain is Ribosomal protein L11 methyltransferase from Thermus thermophilus (strain ATCC 27634 / DSM 579 / HB8).